The following is a 330-amino-acid chain: DNA-directed RNA polymerase subunit alpha (330 aa).

The tract at residues 1–237 (MYTEINEMLT…RQLHAFVDMK (237 aa)) is alpha N-terminal domain (alpha-NTD). The tract at residues 251-330 (FDPVLLRSVD…ENWPPASLGE (80 aa)) is alpha C-terminal domain (alpha-CTD).

Belongs to the RNA polymerase alpha chain family. In terms of assembly, homodimer. The RNAP catalytic core consists of 2 alpha, 1 beta, 1 beta' and 1 omega subunit. When a sigma factor is associated with the core the holoenzyme is formed, which can initiate transcription.

It catalyses the reaction RNA(n) + a ribonucleoside 5'-triphosphate = RNA(n+1) + diphosphate. In terms of biological role, DNA-dependent RNA polymerase catalyzes the transcription of DNA into RNA using the four ribonucleoside triphosphates as substrates. In Legionella pneumophila (strain Paris), this protein is DNA-directed RNA polymerase subunit alpha.